A 233-amino-acid polypeptide reads, in one-letter code: Ribonuclease 3 (233 aa).

The RNase III domain occupies 7–136 (KQYLLSEFNI…FIGALYLDQG (130 aa)). Glu-49 contacts Mg(2+). The active site involves Asp-53. Mg(2+)-binding residues include Asp-122 and Glu-125. The active site involves Glu-125. The 71-residue stretch at 162–232 (DFKSRLQEKL…ARAALKLLEE (71 aa)) folds into the DRBM domain.

The protein belongs to the ribonuclease III family. Homodimer. The cofactor is Mg(2+).

The protein resides in the cytoplasm. The catalysed reaction is Endonucleolytic cleavage to 5'-phosphomonoester.. Functionally, digests double-stranded RNA. Involved in the processing of primary rRNA transcript to yield the immediate precursors to the large and small rRNAs (23S and 16S). Processes some mRNAs, and tRNAs when they are encoded in the rRNA operon. Processes pre-crRNA and tracrRNA of type II CRISPR loci if present in the organism. The protein is Ribonuclease 3 of Leuconostoc citreum (strain KM20).